A 380-amino-acid polypeptide reads, in one-letter code: Succinyl-diaminopimelate desuccinylase (380 aa).

Residue H69 coordinates Zn(2+). The active site involves D71. D102 is a binding site for Zn(2+). Residue E136 is the Proton acceptor of the active site. Residues E137, E165, and H351 each coordinate Zn(2+).

This sequence belongs to the peptidase M20A family. DapE subfamily. As to quaternary structure, homodimer. It depends on Zn(2+) as a cofactor. Requires Co(2+) as cofactor.

It catalyses the reaction N-succinyl-(2S,6S)-2,6-diaminopimelate + H2O = (2S,6S)-2,6-diaminopimelate + succinate. It participates in amino-acid biosynthesis; L-lysine biosynthesis via DAP pathway; LL-2,6-diaminopimelate from (S)-tetrahydrodipicolinate (succinylase route): step 3/3. In terms of biological role, catalyzes the hydrolysis of N-succinyl-L,L-diaminopimelic acid (SDAP), forming succinate and LL-2,6-diaminopimelate (DAP), an intermediate involved in the bacterial biosynthesis of lysine and meso-diaminopimelic acid, an essential component of bacterial cell walls. This is Succinyl-diaminopimelate desuccinylase from Bordetella petrii (strain ATCC BAA-461 / DSM 12804 / CCUG 43448).